The primary structure comprises 531 residues: MWFLRETIFGELVEYFSGGTRQVDVEKLGVCTDNSNVELSSCPDSSFDDEKTNQVNSEGLIIVTWDGEDDPENPKNWPLWAKLVVTFDVCFLTFAVYMGSAIFTPGIQEIRETMHVGTVPVILGLTLFVEGYAVGPLIFSPLSEVPQIGRQKIYVLSLIVFICLQIPTALGSSLGVLLPMRFLAGVFGSPALSTGGASLADIWQPWLYPYFMCFWSLGAVGGPVLGPLLGAAMVVAKSWRWQFWLLMMISALVLVIITFFMPETSEWHLLYKRAKRLRELTGNPNYKTEAEIASSQLSKGQFAKQILVRPIILCVSEPIVLSLTIYIGLVYSILYLWFEAFPILFTTVYHFTTIENGLVYMGILVGSVLTVAFYFIYLRKVMIPKFVENKGKFPAEEILIISFPAAFFIPISLFWFGWTGRESVHWIVPIVGTLFYASGSFLLFQSMFQYLAAAYPKYVASVFAGNALFRSSMAAASPLYARAMFNNTGPSYAPVGWGSTILGVISCIMIPIPFLIYKWGLKLRSRSKYAT.

10 helical membrane-spanning segments follow: residues 83 to 103 (LVVT…SAIF), 119 to 139 (VPVI…PLIF), 158 to 178 (LIVF…GVLL), 182 to 202 (FLAG…LADI), 214 to 234 (FWSL…AAMV), 241 to 261 (WQFW…TFFM), 325 to 345 (IYIG…PILF), 358 to 378 (LVYM…FIYL), 398 to 418 (ILII…WFGW), and 424 to 444 (VHWI…FLLF). N-linked (GlcNAc...) asparagine glycosylation is present at asparagine 486. A helical transmembrane segment spans residues 496-516 (GWGSTILGVISCIMIPIPFLI).

It belongs to the major facilitator superfamily. CAR1 family.

Its subcellular location is the endoplasmic reticulum. It is found in the membrane. The protein is Transporter mfs1 (mfs1) of Schizosaccharomyces pombe (strain 972 / ATCC 24843) (Fission yeast).